A 600-amino-acid polypeptide reads, in one-letter code: Elongation factor 4 (600 aa).

Positions 5 to 187 (SRIRNFSIIA…AIVTRLPPPK (183 aa)) constitute a tr-type G domain. GTP contacts are provided by residues 17–22 (DHGKST) and 134–137 (NKID).

It belongs to the TRAFAC class translation factor GTPase superfamily. Classic translation factor GTPase family. LepA subfamily.

The protein localises to the cell inner membrane. It catalyses the reaction GTP + H2O = GDP + phosphate + H(+). Functionally, required for accurate and efficient protein synthesis under certain stress conditions. May act as a fidelity factor of the translation reaction, by catalyzing a one-codon backward translocation of tRNAs on improperly translocated ribosomes. Back-translocation proceeds from a post-translocation (POST) complex to a pre-translocation (PRE) complex, thus giving elongation factor G a second chance to translocate the tRNAs correctly. Binds to ribosomes in a GTP-dependent manner. The chain is Elongation factor 4 from Rhodospirillum centenum (strain ATCC 51521 / SW).